Reading from the N-terminus, the 1070-residue chain is DNA-directed RNA polymerase subunit beta (1070 aa).

Belongs to the RNA polymerase beta chain family. In plastids the minimal PEP RNA polymerase catalytic core is composed of four subunits: alpha, beta, beta', and beta''. When a (nuclear-encoded) sigma factor is associated with the core the holoenzyme is formed, which can initiate transcription.

The protein localises to the plastid. It is found in the chloroplast. It carries out the reaction RNA(n) + a ribonucleoside 5'-triphosphate = RNA(n+1) + diphosphate. DNA-dependent RNA polymerase catalyzes the transcription of DNA into RNA using the four ribonucleoside triphosphates as substrates. In Nicotiana sylvestris (Wood tobacco), this protein is DNA-directed RNA polymerase subunit beta.